The chain runs to 208 residues: Histone H1t (208 aa).

Positions 1-16 are enriched in low complexity; it reads MSETVPAASAGAVPAV. The interval 1 to 40 is disordered; sequence MSETVPAASAGAVPAVMEKPLTKKRGKKPAGLTSASRKAP. Ser-9 carries the phosphoserine modification. Positions 40–113 constitute an H15 domain; sequence PNLSVSKLIT…GASGSFKLSK (74 aa). Citrulline is present on Arg-58. Residues 102-208 are disordered; the sequence is GTGASGSFKL…ANIRKATSRK (107 aa). Over residues 111 to 136 the composition is skewed to basic residues; it reads LSKKVLPKSTRRKANKSASAKTKKLV. Phosphoserine is present on Ser-143. The segment covering 148-157 has biased composition (basic residues); sequence KTNKRAKKPR. Position 159 is a phosphothreonine (Thr-159). The span at 163-175 shows a compositional bias: basic residues; the sequence is KAVRSGRKAKGAK. Phosphoserine occurs at positions 167 and 182. The segment covering 187 to 208 has biased composition (basic residues); the sequence is RATKPKLTQHHKANIRKATSRK.

This sequence belongs to the histone H1/H5 family. In terms of processing, phosphorylated in early spermatids. Post-translationally, citrullination at Arg-58 (H1R54ci) by PADI4 takes place within the DNA-binding site of H1 and results in its displacement from chromatin and global chromatin decondensation, thereby promoting pluripotency and stem cell maintenance.

In terms of biological role, testis-specific histone H1 that forms less compacted chromatin compared to other H1 histone subtypes. Formation of more relaxed chromatin may be required to promote chromatin architecture required for proper chromosome regulation during meiosis, such as homologous recombination. Histones H1 act as linkers that bind to nucleosomes and compact polynucleosomes into a higher-order chromatin configuration. The chain is Histone H1t from Macaca mulatta (Rhesus macaque).